The primary structure comprises 388 residues: Chaperone protein DnaJ 1 (388 aa).

The J domain maps to 10–74 (DFYKELGVSS…VKRKEYDETR (65 aa)). The CR-type zinc finger occupies 159-237 (GVAMPLRLTS…CKGTGVTTRT (79 aa)). Positions 172, 175, 189, 192, 211, 214, 225, and 228 each coordinate Zn(2+). CXXCXGXG motif repeat units lie at residues 172–179 (CTNCHGSG), 189–196 (CSTCNGSG), 211–218 (CTECRGSG), and 225–232 (CEECKGTG).

It belongs to the DnaJ family. In terms of assembly, homodimer. It depends on Zn(2+) as a cofactor.

The protein localises to the cytoplasm. Its function is as follows. Participates actively in the response to hyperosmotic and heat shock by preventing the aggregation of stress-denatured proteins and by disaggregating proteins, also in an autonomous, DnaK-independent fashion. Unfolded proteins bind initially to DnaJ; upon interaction with the DnaJ-bound protein, DnaK hydrolyzes its bound ATP, resulting in the formation of a stable complex. GrpE releases ADP from DnaK; ATP binding to DnaK triggers the release of the substrate protein, thus completing the reaction cycle. Several rounds of ATP-dependent interactions between DnaJ, DnaK and GrpE are required for fully efficient folding. Also involved, together with DnaK and GrpE, in the DNA replication of plasmids through activation of initiation proteins. The protein is Chaperone protein DnaJ 1 of Mycobacterium leprae (strain TN).